A 195-amino-acid polypeptide reads, in one-letter code: HTH-type transcriptional regulator BetI (195 aa).

One can recognise an HTH tetR-type domain in the interval 8–68 (PIRRRQLIDA…ATMRDITSQL (61 aa)). A DNA-binding region (H-T-H motif) is located at residues 31 to 50 (TIAQIARRAGVSTGIISHYF).

Its pathway is amine and polyamine biosynthesis; betaine biosynthesis via choline pathway [regulation]. Functionally, repressor involved in the biosynthesis of the osmoprotectant glycine betaine. It represses transcription of the choline transporter BetT and the genes of BetAB involved in the synthesis of glycine betaine. The polypeptide is HTH-type transcriptional regulator BetI (Klebsiella pneumoniae (strain 342)).